The primary structure comprises 400 residues: Golgin-45 (400 aa).

Over residues 1-16 (MTTKNLETKVTVTSSP) the composition is skewed to polar residues. The tract at residues 1 to 58 (MTTKNLETKVTVTSSPIRGAGDGMETEEPPKSVEVTSGVQSRKHHSLQSPWKKAVPSE) is disordered. Ser15 is modified (phosphoserine). The Tankyrase-binding motif signature appears at 18-22 (RGAGD). Ser49 carries the phosphoserine modification. The stretch at 120 to 213 (NKELSEVKNV…QLERMSIQCD (94 aa)) forms a coiled coil. Position 348 is a phosphothreonine (Thr348). Position 353 is a phosphoserine (Ser353). The segment at 394–400 (RGELIAL) is essential for interaction with GORASP2.

Interacts with GORASP2. Interacts with the GTP-bound form of RAB2, but not with other Golgi Rab proteins. Identified in a complex with RAB2 and GORASP2. ADP-ribosylated by tankyrase TNKS and TNKS2. Poly-ADP-ribosylated protein is recognized by RNF146, followed by ubiquitination. Post-translationally, ubiquitinated by RNF146 when poly-ADP-ribosylated, leading to its degradation. As to expression, detected in adrenal gland.

The protein resides in the golgi apparatus membrane. It is found in the nucleus. Its subcellular location is the cytoplasm. Functionally, required for normal Golgi structure and for protein transport from the endoplasmic reticulum (ER) through the Golgi apparatus to the cell surface. The protein is Golgin-45 (BLZF1) of Homo sapiens (Human).